Reading from the N-terminus, the 1604-residue chain is Metabotropic glutamate receptor-like protein R (1604 aa).

The N-terminal stretch at 1 to 27 (MVIKKPFIFIFICFLICLLICIDLTNC) is a signal peptide. Topologically, residues 28 to 1149 (NTINNNNNNN…TDVSKTKIAK (1122 aa)) are extracellular. The segment covering 38-69 (NNNNNNNNNNNNNNNNNNNNNNNNNNNNNNDN) has biased composition (low complexity). The interval 38–72 (NNNNNNNNNNNNNNNNNNNNNNNNNNNNNNDNNEN) is disordered. A coiled-coil region spans residues 98-133 (DFYINKIKKEIKDREKYKNNIENEILKINSQKKRKK). Residues 213-263 (NNNNNNNNNNNNNNNNNNKNNNNNNNNKNNNNNNNNKNNNNNNNNKNNNKN) are disordered. Asn285, Asn327, Asn359, Asn375, Asn489, Asn498, Asn525, Asn577, Asn593, Asn624, Asn768, Asn837, Asn841, Asn851, Asn864, Asn876, Asn885, Asn888, Asn913, Asn967, Asn991, Asn1097, and Asn1109 each carry an N-linked (GlcNAc...) asparagine glycan. Residues 1150-1170 (IIIGISAIIVSIGVLITAILT) traverse the membrane as a helical segment. Over 1171-1184 (FIYRKRKIMRYSNP) the chain is Cytoplasmic. The helical transmembrane segment at 1185–1205 (VFLLIILVGCVCGLVSTFVSF) threads the bilayer. Residues 1206–1211 (STTSAT) lie on the Extracellular side of the membrane. The chain crosses the membrane as a helical span at residues 1212 to 1232 (CSIRMVLIPLFFFIITSAIFI). Residues 1233-1256 (KQYRVYCLIRGVEELHDMSIENSY) lie on the Cytoplasmic side of the membrane. Residues 1257 to 1277 (LLKLQSFILIIPAILIAVSVI) form a helical membrane-spanning segment. Residues 1278 to 1304 (ATRMHRKYNFDLQKETIQAYCYSKNFY) are Extracellular-facing. A helical membrane pass occupies residues 1305–1325 (IIFICLALYEFSILLYGCWIV). The Cytoplasmic segment spans residues 1326-1340 (IKCRQYRSFPGSFNE). A helical transmembrane segment spans residues 1341 to 1361 (FFYIGVLIYVLTVILVVSIPI). Over 1362-1372 (GFALLNSALTD) the chain is Extracellular. Residues 1373–1393 (FLLYSIPILVLIVAIIGLLFA) form a helical membrane-spanning segment. Over 1394–1604 (PKFYFLFRTD…KSSQNSPLLD (211 aa)) the chain is Cytoplasmic. The tract at residues 1457 to 1604 (TGSNTSDDVS…KSSQNSPLLD (148 aa)) is disordered. Composition is skewed to low complexity over residues 1471-1527 (FDSP…NKNN) and 1534-1556 (SSSN…GRSS). A compositionally biased stretch (basic residues) spans 1563–1572 (NNKKNRRKNS). Polar residues predominate over residues 1573-1584 (LRTPILNSLLSP).

The protein belongs to the G-protein coupled receptor 3 family. GABA-B receptor subfamily.

It is found in the membrane. The sequence is that of Metabotropic glutamate receptor-like protein R (grlR) from Dictyostelium discoideum (Social amoeba).